Reading from the N-terminus, the 364-residue chain is Methylthioribose-1-phosphate isomerase (364 aa).

Substrate contacts are provided by residues 53–55 (RGA), Arg90, and Gln203. The active-site Proton donor is Asp244. Position 254–255 (254–255 (NK)) interacts with substrate.

This sequence belongs to the eIF-2B alpha/beta/delta subunits family. MtnA subfamily.

It catalyses the reaction 5-(methylsulfanyl)-alpha-D-ribose 1-phosphate = 5-(methylsulfanyl)-D-ribulose 1-phosphate. It participates in amino-acid biosynthesis; L-methionine biosynthesis via salvage pathway; L-methionine from S-methyl-5-thio-alpha-D-ribose 1-phosphate: step 1/6. Its function is as follows. Catalyzes the interconversion of methylthioribose-1-phosphate (MTR-1-P) into methylthioribulose-1-phosphate (MTRu-1-P). The sequence is that of Methylthioribose-1-phosphate isomerase from Rhizobium meliloti (strain 1021) (Ensifer meliloti).